The chain runs to 268 residues: Phosphate import ATP-binding protein PstB 2 (268 aa).

The region spanning 22–263 is the ABC transporter domain; it reads MALTGVNFYY…PKVKRTEDYI (242 aa). 54–61 provides a ligand contact to ATP; it reads GPSGCGKS.

This sequence belongs to the ABC transporter superfamily. Phosphate importer (TC 3.A.1.7) family. In terms of assembly, the complex is composed of two ATP-binding proteins (PstB), two transmembrane proteins (PstC and PstA) and a solute-binding protein (PstS).

It is found in the cell inner membrane. It carries out the reaction phosphate(out) + ATP + H2O = ADP + 2 phosphate(in) + H(+). Its function is as follows. Part of the ABC transporter complex PstSACB involved in phosphate import. Responsible for energy coupling to the transport system. This is Phosphate import ATP-binding protein PstB 2 from Rhizobium johnstonii (strain DSM 114642 / LMG 32736 / 3841) (Rhizobium leguminosarum bv. viciae).